Here is a 138-residue protein sequence, read N- to C-terminus: Transcription antitermination protein NusB (138 aa).

The protein belongs to the NusB family.

Functionally, involved in transcription antitermination. Required for transcription of ribosomal RNA (rRNA) genes. Binds specifically to the boxA antiterminator sequence of the ribosomal RNA (rrn) operons. The polypeptide is Transcription antitermination protein NusB (Helicobacter pylori (strain G27)).